Here is a 304-residue protein sequence, read N- to C-terminus: Chromo domain-containing protein cec-1 (304 aa).

Positions 8–66 constitute a Chromo domain; the sequence is YTVESILEHRKKKGKSEFYIKWLGYDHTHNSWEPKENIVDPTLIEAFFTREAARKAEIK. The segment covering 63–73 has biased composition (basic and acidic residues); the sequence is AEIKAKKDKMA. 2 disordered regions span residues 63-235 and 248-304; these read AEIK…EIQL and VEPA…AIIE. A compositionally biased stretch (low complexity) spans 75–102; it reads GKKGASSKASASVSKASASTPARGAKAA. Residues 106 to 116 are compositionally biased toward basic residues; sequence PPKKSPPKRQR. Over residues 122-141 the composition is skewed to basic and acidic residues; sequence IRPDSDTDEEHSSADKKSKA. 3 stretches are compositionally biased toward acidic residues: residues 142–152, 163–204, and 212–233; these read EDEEEVEDDEE, EEPE…DVQL, and EEEE…EEEI. The segment covering 248–292 has biased composition (low complexity); it reads VEPAVATPEPSEPSSSEKAVVENGSSSAAAGNSASKPEVSAVEVV. Over residues 293–304 the composition is skewed to acidic residues; the sequence is TVEDDDDIAIIE.

The protein resides in the nucleus. Its subcellular location is the chromosome. This Caenorhabditis elegans protein is Chromo domain-containing protein cec-1 (cec-1).